The chain runs to 554 residues: Putative F-box/LRR-repeat protein 8 (554 aa).

The F-box domain maps to 71 to 117; the sequence is YDYISNLPDECLSLIFQSLTCADLKRCSLVCRRWLTIEGQCRHRLSL. LRR repeat units lie at residues 119-144, 148-173, 174-199, 205-224, 250-275, 301-325, 326-351, 354-379, 383-404, 405-428, 430-455, and 456-480; these read AQSD…VLRS, SLGI…KLRG, CPEI…SFGS, KGMN…SVKR, KELH…KIFR, RIQM…HLVK, TPDC…HIDG, TNRI…VLIG, TKLS…ALCG, SDTV…KLCI, NCPI…KVKK, and CRGV…NLDA.

The chain is Putative F-box/LRR-repeat protein 8 (FBL8) from Arabidopsis thaliana (Mouse-ear cress).